A 268-amino-acid polypeptide reads, in one-letter code: MATYIVGDIQGCFDELQQLLKRVNFSTQHDQLWLAGDLVARGPKSLETLRFVKSLGDSAKVVLGNHDLHLLAVSYGLKKRKDKDKTTPIFLAKDREELLSWLAKQPLLAEHDEFVMCHAGISPQWDLETARQCAREVERIIQGEELPWLLKNMYSNLPDLWDDSLEGLDRYRYIINAFTRMRFCFSDGRLDMDCKLPPQEVTGDQLVPWFELPHRIPLEKTVLFGHWAALQGYIDEKVIGLDTGCVWGGSLTMIRWEDKQLFTQDALD.

The protein belongs to the Ap4A hydrolase family.

It catalyses the reaction P(1),P(4)-bis(5'-adenosyl) tetraphosphate + H2O = 2 ADP + 2 H(+). Hydrolyzes diadenosine 5',5'''-P1,P4-tetraphosphate to yield ADP. The polypeptide is Bis(5'-nucleosyl)-tetraphosphatase, symmetrical (Vibrio parahaemolyticus serotype O3:K6 (strain RIMD 2210633)).